A 427-amino-acid polypeptide reads, in one-letter code: Inorganic pyrophosphatase 1 (427 aa).

Low complexity predominate over residues 36–52 (SSSSNTATTSTSSSNTS). Disordered regions lie at residues 36–63 (SSSS…TSRP) and 77–118 (SMDS…RSLH). Composition is skewed to polar residues over residues 53–63 (QKWATSRTSRP) and 77–114 (SMDS…ANSE). Positions 259, 264, and 296 each coordinate Mg(2+).

This sequence belongs to the PPase family. It depends on Mg(2+) as a cofactor. In terms of tissue distribution, expressed in coelomocytes, the intestine and in the nervous system including the nerve cords and sensory neurons.

It localises to the cytoplasm. It catalyses the reaction diphosphate + H2O = 2 phosphate + H(+). Catalyzes the hydrolysis of inorganic pyrophosphate (PPi) forming two phosphate ions. Plays a role in intestinal development and subsequent normal secretory, digestive and absorption functions. Required for larval development. This is Inorganic pyrophosphatase 1 from Caenorhabditis elegans.